We begin with the raw amino-acid sequence, 132 residues long: Small ribosomal subunit protein uS8 (132 aa).

It belongs to the universal ribosomal protein uS8 family. As to quaternary structure, part of the 30S ribosomal subunit. Contacts proteins S5 and S12.

In terms of biological role, one of the primary rRNA binding proteins, it binds directly to 16S rRNA central domain where it helps coordinate assembly of the platform of the 30S subunit. This chain is Small ribosomal subunit protein uS8, found in Halalkalibacterium halodurans (strain ATCC BAA-125 / DSM 18197 / FERM 7344 / JCM 9153 / C-125) (Bacillus halodurans).